A 353-amino-acid polypeptide reads, in one-letter code: Polycomb group RING finger protein 6 (353 aa).

The interval 1–116 (MDEAETDATE…FSLRLESGRA (116 aa)) is disordered. A compositionally biased stretch (basic and acidic residues) spans 9–19 (TENKRASEAKR). The span at 23-39 (MPPPPPPPPPISPPALI) shows a compositional bias: pro residues. Phosphoserine is present on Ser34. Residues 40–52 (PAPAAGEEGPASL) are compositionally biased toward low complexity. Residues 69–82 (EPERSLGRLRGRFE) show a composition bias toward basic and acidic residues. Positions 71 to 112 (ERSLGRLRGRFEDYDEELEEEEEMEEEEEEEEEMSHFSLRLE) form a coiled coil. Positions 83-103 (DYDEELEEEEEMEEEEEEEEE) are enriched in acidic residues. Ser118 is subject to Phosphoserine. The RING-type zinc-finger motif lies at 137–176 (CSICKGYLIDATTITECLHTFCKSCIVRHFYYSNRCPKCN). Glycyl lysine isopeptide (Lys-Gly) (interchain with G-Cter in SUMO2) cross-links involve residues Lys226 and Lys237.

Component of a PRC1-like complex. Interacts with BMI1/PCGF4, RING1 and RNF2. Interacts with KDM5D. Interacts with CBX4, CBX6, CBX7 and CBX8. Post-translationally, phosphorylated during mitosis. Expressed in ovary, testis, stomach, liver, thymus and kidney (at protein level).

Its subcellular location is the nucleus. Functionally, transcriptional repressor. May modulate the levels of histone H3K4Me3 by activating KDM5D histone demethylase. Component of a Polycomb group (PcG) multiprotein PRC1-like complex, a complex class required to maintain the transcriptionally repressive state of many genes, including Hox genes, throughout development. PcG PRC1 complex acts via chromatin remodeling and modification of histones; it mediates monoubiquitination of histone H2A 'Lys-119', rendering chromatin heritably changed in its expressibility. Within the PRC1-like complex, regulates RNF2 ubiquitin ligase activity. The chain is Polycomb group RING finger protein 6 (Pcgf6) from Mus musculus (Mouse).